A 407-amino-acid chain; its full sequence is Betaine--homocysteine S-methyltransferase 1 (407 aa).

Residues R11 to L314 form the Hcy-binding domain. Residues K40, K93, and K98 each carry the N6-succinyllysine modification. Position 217 (C217) interacts with Zn(2+). An N6-succinyllysine mark is found at K232 and K241. 2 residues coordinate Zn(2+): C299 and C300. Residue S330 is modified to Phosphoserine. N6-succinyllysine occurs at positions 340 and 377.

In terms of assembly, homotetramer. Requires Zn(2+) as cofactor. As to expression, highly expressed in liver and kidney (at protein level). Expressed at lower levels in testis, lung, cerebellum, skeletal muscle and pancreas (at protein level).

It is found in the cytoplasm. It localises to the cytosol. Its subcellular location is the nucleus. The catalysed reaction is L-homocysteine + glycine betaine = N,N-dimethylglycine + L-methionine. Its pathway is amine and polyamine degradation; betaine degradation; sarcosine from betaine: step 1/2. It participates in amino-acid biosynthesis; L-methionine biosynthesis via de novo pathway; L-methionine from L-homocysteine (BhmT route): step 1/1. Involved in the regulation of homocysteine metabolism. Converts betaine and homocysteine to dimethylglycine and methionine, respectively. This reaction is also required for the irreversible oxidation of choline. This is Betaine--homocysteine S-methyltransferase 1 from Rattus norvegicus (Rat).